The following is a 248-amino-acid chain: GTP cyclohydrolase 1 type 2 homolog (248 aa).

His64, His65, Asp101, His216, and Glu220 together coordinate a divalent metal cation.

This sequence belongs to the GTP cyclohydrolase I type 2/NIF3 family. In terms of assembly, homohexamer.

The chain is GTP cyclohydrolase 1 type 2 homolog from Borreliella burgdorferi (strain ATCC 35210 / DSM 4680 / CIP 102532 / B31) (Borrelia burgdorferi).